Reading from the N-terminus, the 76-residue chain is AKVTEKSWQPQTTSTKRWKKRKTPSQPRSRGKVRKIYKKVKRPLHVCSRKKYSPKVITTSRRQKRARRANKFETIP.

Positions 1–11 (AKVTEKSWQPQ) are enriched in polar residues. Disordered regions lie at residues 1–34 (AKVT…GKVR) and 56–76 (VITT…ETIP). The span at 16-34 (KRWKKRKTPSQPRSRGKVR) shows a compositional bias: basic residues.

Its subcellular location is the nucleus. The protein resides in the chromosome. Its function is as follows. Involved in nuclear basic protein transition: histones are replaced by spermatid specific proteins which are themselves replaced by protamines in late spermatids. This is Spermatid nuclear transition protein 3 (TNP3) from Sus scrofa (Pig).